The chain runs to 274 residues: Large ribosomal subunit protein uL2 (274 aa).

Disordered regions lie at residues 28-54 (KPYAPLLEKSSKTGGRNNNGRITTRHI) and 221-274 (RGTA…RTKK). A compositionally biased stretch (polar residues) spans 39–49 (KTGGRNNNGRI).

This sequence belongs to the universal ribosomal protein uL2 family. In terms of assembly, part of the 50S ribosomal subunit. Forms a bridge to the 30S subunit in the 70S ribosome.

Its function is as follows. One of the primary rRNA binding proteins. Required for association of the 30S and 50S subunits to form the 70S ribosome, for tRNA binding and peptide bond formation. It has been suggested to have peptidyltransferase activity; this is somewhat controversial. Makes several contacts with the 16S rRNA in the 70S ribosome. This chain is Large ribosomal subunit protein uL2, found in Photorhabdus laumondii subsp. laumondii (strain DSM 15139 / CIP 105565 / TT01) (Photorhabdus luminescens subsp. laumondii).